We begin with the raw amino-acid sequence, 226 residues long: Small ribosomal subunit protein uS3 (226 aa).

A KH type-2 domain is found at 39 to 107 (VRNFIRKKLA…PVHINIEEIR (69 aa)).

Belongs to the universal ribosomal protein uS3 family. In terms of assembly, part of the 30S ribosomal subunit. Forms a tight complex with proteins S10 and S14.

Binds the lower part of the 30S subunit head. Binds mRNA in the 70S ribosome, positioning it for translation. In Alkalilimnicola ehrlichii (strain ATCC BAA-1101 / DSM 17681 / MLHE-1), this protein is Small ribosomal subunit protein uS3.